A 399-amino-acid chain; its full sequence is Elongation factor Tu 2 (399 aa).

In terms of domain architecture, tr-type G spans 10–209 (KPHVNIGTIG…QVDGYIPEPE (200 aa)). A G1 region spans residues 19–26 (GHVDHGKT). 19–26 (GHVDHGKT) is a binding site for GTP. Position 26 (Thr-26) interacts with Mg(2+). The interval 60-64 (GITIA) is G2. The tract at residues 81-84 (DCPG) is G3. Residues 81–85 (DCPGH) and 136–139 (NKAD) contribute to the GTP site. The interval 136–139 (NKAD) is G4. The segment at 174 to 176 (SAL) is G5.

It belongs to the TRAFAC class translation factor GTPase superfamily. Classic translation factor GTPase family. EF-Tu/EF-1A subfamily. As to quaternary structure, monomer.

Its subcellular location is the cytoplasm. The enzyme catalyses GTP + H2O = GDP + phosphate + H(+). Its function is as follows. GTP hydrolase that promotes the GTP-dependent binding of aminoacyl-tRNA to the A-site of ribosomes during protein biosynthesis. The protein is Elongation factor Tu 2 of Syntrophotalea carbinolica (strain DSM 2380 / NBRC 103641 / GraBd1) (Pelobacter carbinolicus).